The primary structure comprises 178 residues: Large ribosomal subunit protein uL30 (178 aa).

It belongs to the universal ribosomal protein uL30 family. As to quaternary structure, part of the 50S ribosomal subunit.

The chain is Large ribosomal subunit protein uL30 from Pyrobaculum aerophilum (strain ATCC 51768 / DSM 7523 / JCM 9630 / CIP 104966 / NBRC 100827 / IM2).